Consider the following 868-residue polypeptide: LPS-assembly protein LptD (868 aa).

Positions 1-24 (MLKGIHKYLLMCFGTVLFTVQANA) are cleaved as a signal peptide.

The protein belongs to the LptD family. As to quaternary structure, component of the lipopolysaccharide transport and assembly complex. Interacts with LptE and LptA.

Its subcellular location is the cell outer membrane. Functionally, together with LptE, is involved in the assembly of lipopolysaccharide (LPS) at the surface of the outer membrane. This chain is LPS-assembly protein LptD, found in Francisella tularensis subsp. novicida (strain U112).